The chain runs to 329 residues: 31 kDa immunogenic protein (329 aa).

The N-terminal stretch at 1–28 (MKFGSKIRRLAVAAVAGAIALGASFAVA) is a signal peptide.

This is 31 kDa immunogenic protein (bcsP31) from Brucella abortus biovar 1 (strain 9-941).